The following is a 523-amino-acid chain: Cytochrome P450 52A3-A (523 aa).

Residues 17–34 (WYTILFGAAVTYFLSIAL) traverse the membrane as a helical segment. Cys-471 contributes to the heme binding site.

The protein belongs to the cytochrome P450 family. Requires heme as cofactor.

Its subcellular location is the membrane. Its function is as follows. Together with an NADPH cytochrome P450 the enzyme system catalyzes the terminal hydroxylation as the first step in the assimilation of alkanes and fatty acids. The chain is Cytochrome P450 52A3-A (CYP52A3-A) from Candida maltosa (Yeast).